Reading from the N-terminus, the 236-residue chain is Ureidoacrylate amidohydrolase RutB (236 aa).

Asp-24 functions as the Proton acceptor in the catalytic mechanism. Lys-133 is an active-site residue. Cys-166 acts as the Nucleophile in catalysis.

It belongs to the isochorismatase family. RutB subfamily.

The enzyme catalyses (Z)-3-ureidoacrylate + H2O + H(+) = (Z)-3-aminoacrylate + NH4(+) + CO2. It carries out the reaction (Z)-3-ureidoacrylate + H2O = (Z)-3-aminoacrylate + carbamate + H(+). The catalysed reaction is (Z)-2-methylureidoacrylate + H2O + H(+) = (Z)-2-methylaminoacrylate + NH4(+) + CO2. In terms of biological role, hydrolyzes ureidoacrylate to form aminoacrylate and carbamate. The carbamate hydrolyzes spontaneously, thereby releasing one of the nitrogen atoms of the pyrimidine ring as ammonia and one of its carbon atoms as CO2. The sequence is that of Ureidoacrylate amidohydrolase RutB from Klebsiella variicola (strain At-22).